Reading from the N-terminus, the 261-residue chain is Zinc import ATP-binding protein ZnuC (261 aa).

One can recognise an ABC transporter domain in the interval 5 to 220 (ISLKALSVTF…PSYIALFGSA (216 aa)). Residue 37–44 (GPNGAGKS) coordinates ATP. The interval 236 to 261 (HHDLAGQPVSGDATQCNHHHHGHHHD) is disordered. Basic residues predominate over residues 252–261 (NHHHHGHHHD).

Belongs to the ABC transporter superfamily. Zinc importer (TC 3.A.1.15.5) family. As to quaternary structure, the complex is composed of two ATP-binding proteins (ZnuC), two transmembrane proteins (ZnuB) and a solute-binding protein (ZnuA).

The protein localises to the cell inner membrane. It catalyses the reaction Zn(2+)(out) + ATP(in) + H2O(in) = Zn(2+)(in) + ADP(in) + phosphate(in) + H(+)(in). Part of the ABC transporter complex ZnuABC involved in zinc import. Responsible for energy coupling to the transport system. This is Zinc import ATP-binding protein ZnuC from Vibrio vulnificus (strain CMCP6).